An 840-amino-acid chain; its full sequence is Subtilisin-like protease SBT2.3 (840 aa).

Positions 1–27 (MVRVMLVRFGFLLLMISFVFLSNNTLG) are cleaved as a signal peptide. Positions 28 to 146 (QQQDDDDDSA…IVLDYSVRTA (119 aa)) are cleaved as a propeptide — activation peptide. An Inhibitor I9 domain is found at 38–146 (VYIVTLKQPP…IVLDYSVRTA (109 aa)). Residues 61 to 81 (KSKFTPKLRPRNNSRKRHGKS) show a composition bias toward basic residues. The segment at 61–85 (KSKFTPKLRPRNNSRKRHGKSKIPS) is disordered. A glycan (N-linked (GlcNAc...) asparagine) is linked at N72. In terms of domain architecture, Peptidase S8 spans 148-694 (TYTPQFMGLP…SGFVNATAAL (547 aa)). The active-site Charge relay system is the D180. N193 and N241 each carry an N-linked (GlcNAc...) asparagine glycan. The Charge relay system role is filled by H255. N398, N427, N480, N525, and N553 each carry an N-linked (GlcNAc...) asparagine glycan. Positions 418–513 (MISAFHALNN…MDMPGIIIPS (96 aa)) constitute a PA domain. The active-site Charge relay system is the S619. N-linked (GlcNAc...) asparagine glycosylation is found at N689, N715, N723, N767, and N808.

It belongs to the peptidase S8 family.

It is found in the secreted. The chain is Subtilisin-like protease SBT2.3 from Arabidopsis thaliana (Mouse-ear cress).